Consider the following 122-residue polypeptide: UPF0102 protein xcc-b100_3645 (122 aa).

It belongs to the UPF0102 family.

The protein is UPF0102 protein xcc-b100_3645 of Xanthomonas campestris pv. campestris (strain B100).